A 1024-amino-acid polypeptide reads, in one-letter code: Beta-galactosidase (1024 aa).

The substrate site is built by Asn103 and Asp202. Asp202 serves as a coordination point for Na(+). 3 residues coordinate Mg(2+): Glu417, His419, and Glu462. Substrate is bound by residues Glu462 and 538-541; that span reads EYAH. Glu462 (proton donor) is an active-site residue. Residue Glu538 is the Nucleophile of the active site. Residue Asn598 coordinates Mg(2+). Na(+)-binding residues include Phe602 and Asn605. Asn605 and Trp1000 together coordinate substrate.

The protein belongs to the glycosyl hydrolase 2 family. Homotetramer. It depends on Mg(2+) as a cofactor. Na(+) serves as cofactor.

The catalysed reaction is Hydrolysis of terminal non-reducing beta-D-galactose residues in beta-D-galactosides.. In Escherichia coli O6:H1 (strain CFT073 / ATCC 700928 / UPEC), this protein is Beta-galactosidase.